We begin with the raw amino-acid sequence, 941 residues long: Isoleucine--tRNA ligase (941 aa).

A 'HIGH' region motif is present at residues 58–68 (PYANGNIHLGH). Residue Glu564 coordinates L-isoleucyl-5'-AMP. The 'KMSKS' region signature appears at 605–609 (KMSKS). Residue Lys608 participates in ATP binding. Zn(2+) is bound by residues Cys904, Cys907, Cys924, and Cys927.

It belongs to the class-I aminoacyl-tRNA synthetase family. IleS type 1 subfamily. In terms of assembly, monomer. The cofactor is Zn(2+).

It localises to the cytoplasm. It carries out the reaction tRNA(Ile) + L-isoleucine + ATP = L-isoleucyl-tRNA(Ile) + AMP + diphosphate. Functionally, catalyzes the attachment of isoleucine to tRNA(Ile). As IleRS can inadvertently accommodate and process structurally similar amino acids such as valine, to avoid such errors it has two additional distinct tRNA(Ile)-dependent editing activities. One activity is designated as 'pretransfer' editing and involves the hydrolysis of activated Val-AMP. The other activity is designated 'posttransfer' editing and involves deacylation of mischarged Val-tRNA(Ile). The polypeptide is Isoleucine--tRNA ligase (Hahella chejuensis (strain KCTC 2396)).